The following is a 127-amino-acid chain: Holo-[acyl-carrier-protein] synthase (127 aa).

Asp-8 and Glu-60 together coordinate Mg(2+).

This sequence belongs to the P-Pant transferase superfamily. AcpS family. Requires Mg(2+) as cofactor.

The protein resides in the cytoplasm. The catalysed reaction is apo-[ACP] + CoA = holo-[ACP] + adenosine 3',5'-bisphosphate + H(+). In terms of biological role, transfers the 4'-phosphopantetheine moiety from coenzyme A to a Ser of acyl-carrier-protein. This is Holo-[acyl-carrier-protein] synthase from Marinomonas sp. (strain MWYL1).